A 128-amino-acid chain; its full sequence is Protein Wnt-10 (128 aa).

Intrachain disulfides connect cysteine 3-cysteine 17, cysteine 5-cysteine 12, cysteine 74-cysteine 105, cysteine 90-cysteine 100, and cysteine 127-cysteine 128. Residue serine 9 is the site of O-palmitoleoyl serine; by PORCN attachment. N-linked (GlcNAc...) asparagine glycosylation occurs at asparagine 91.

This sequence belongs to the Wnt family. In terms of processing, palmitoleoylation is required for efficient binding to frizzled receptors. Depalmitoleoylation leads to Wnt signaling pathway inhibition. In embryo, in dorsal hindbrain; in adults, in brain.

The protein resides in the secreted. Its subcellular location is the extracellular space. The protein localises to the extracellular matrix. Ligand for members of the frizzled family of seven transmembrane receptors. Probable developmental protein. May be a signaling molecule which affects the development of discrete regions of tissues. Is likely to signal over only few cell diameters. The protein is Protein Wnt-10 (wnt10) of Xenopus laevis (African clawed frog).